We begin with the raw amino-acid sequence, 313 residues long: Ribosomal RNA small subunit methyltransferase H (313 aa).

Residues 33 to 35, D53, F80, D101, and Q108 each bind S-adenosyl-L-methionine; that span reads GGH. The disordered stretch occupies residues 282 to 313; sequence LVHNKPLTPSEAEIEQNPRARSAKLRVAQKLA.

The protein belongs to the methyltransferase superfamily. RsmH family.

It localises to the cytoplasm. It catalyses the reaction cytidine(1402) in 16S rRNA + S-adenosyl-L-methionine = N(4)-methylcytidine(1402) in 16S rRNA + S-adenosyl-L-homocysteine + H(+). Functionally, specifically methylates the N4 position of cytidine in position 1402 (C1402) of 16S rRNA. In Magnetococcus marinus (strain ATCC BAA-1437 / JCM 17883 / MC-1), this protein is Ribosomal RNA small subunit methyltransferase H.